A 149-amino-acid chain; its full sequence is UPF0178 protein VV1_1847 (149 aa).

Belongs to the UPF0178 family.

The polypeptide is UPF0178 protein VV1_1847 (Vibrio vulnificus (strain CMCP6)).